A 362-amino-acid polypeptide reads, in one-letter code: HMG box-containing protein C19G7.04 (362 aa).

The 165-residue stretch at 135–299 folds into the SprT-like domain; the sequence is KCFLARLEDE…RLCKSQIKQI (165 aa). Positions 306 to 348 form a DNA-binding region, HMG box; it reads PNAFQIFLKENSKRLRKLHPHITHKELMKKLSDEYHRTKDAKQ.

It is found in the nucleus. Its subcellular location is the cytoplasm. The protein localises to the cytoskeleton. It localises to the spindle. The sequence is that of HMG box-containing protein C19G7.04 from Schizosaccharomyces pombe (strain 972 / ATCC 24843) (Fission yeast).